We begin with the raw amino-acid sequence, 518 residues long: Glutamate--cysteine ligase (518 aa).

This sequence belongs to the glutamate--cysteine ligase type 1 family. Type 1 subfamily.

It carries out the reaction L-cysteine + L-glutamate + ATP = gamma-L-glutamyl-L-cysteine + ADP + phosphate + H(+). The protein operates within sulfur metabolism; glutathione biosynthesis; glutathione from L-cysteine and L-glutamate: step 1/2. This Salmonella agona (strain SL483) protein is Glutamate--cysteine ligase.